A 124-amino-acid chain; its full sequence is MADLAKIEEQLSSLTLMQAAELVKMLEEKWCVSAAAPVAVAAAGAAPAAEAVAEKTEFEIVLIAAGDKKVEVIKAVKDITGLGLIEAKKLVDEAPKLMKSNVKKAEAEEIKGKLEAAGAKVELK.

Belongs to the bacterial ribosomal protein bL12 family. Homodimer. Part of the ribosomal stalk of the 50S ribosomal subunit. Forms a multimeric L10(L12)X complex, where L10 forms an elongated spine to which 2 to 4 L12 dimers bind in a sequential fashion. Binds GTP-bound translation factors.

Functionally, forms part of the ribosomal stalk which helps the ribosome interact with GTP-bound translation factors. Is thus essential for accurate translation. The sequence is that of Large ribosomal subunit protein bL12 from Rickettsia akari (strain Hartford).